We begin with the raw amino-acid sequence, 627 residues long: Glycerophosphodiester phosphodiesterase domain-containing protein 4 (627 aa).

Topologically, residues 1 to 17 are cytoplasmic; sequence MLLFLWIETSNEYFNFD. A helical transmembrane segment spans residues 18-38; that stretch reads WVIFLGTGYWFYWSIFILSLA. Residue G39 is a topological domain, extracellular. The chain crosses the membrane as a helical span at residues 40-60; that stretch reads ILTAYSSLLLLLGLLLLWEGI. The Cytoplasmic segment spans residues 61–69; the sequence is ELYLHLCHK. Residues 70–90 traverse the membrane as a helical segment; sequence ILILLVILPCVILMFIICKFW. Residues 91 to 107 are Extracellular-facing; sequence KERWLVAGLSLQIFAPY. A helical membrane pass occupies residues 108–128; that stretch reads VHLVSITVMVILFWPVAIYVA. Over 129–162 the chain is Cytoplasmic; that stretch reads RLEREVRMRRYRMTHSEKKRLKKCNVIARLRGLQ. The helical transmembrane segment at 163–183 threads the bilayer; the sequence is VAVGLPFLLIFLSLCLMPLGI. The Extracellular portion of the chain corresponds to 184–468; that stretch reads YSPCIQEKEN…PHFFMTPKFY (285 aa). The GP-PDE domain maps to 198 to 457; the sequence is PTLFGHRGAP…DNIGLLSQLN (260 aa). Residues E230, D232, and H245 each contribute to the a divalent metal cation site. Residues N308 and N397 are each glycosylated (N-linked (GlcNAc...) asparagine). A helical transmembrane segment spans residues 469–489; the sequence is MFIWLLVDIISVLFIVAIFCF. Over 490–627 the chain is Cytoplasmic; that stretch reads HWRRETIKEK…TMPSVEVPYP (138 aa).

It belongs to the glycerophosphoryl diester phosphodiesterase family.

The protein localises to the membrane. The chain is Glycerophosphodiester phosphodiesterase domain-containing protein 4 (GDPD4) from Macaca fascicularis (Crab-eating macaque).